The primary structure comprises 545 residues: Chaperonin GroEL (545 aa).

Residues 30–33 (TLGP), Lys-51, 87–91 (DGTTT), Gly-415, and Asp-495 each bind ATP.

The protein belongs to the chaperonin (HSP60) family. In terms of assembly, forms a cylinder of 14 subunits composed of two heptameric rings stacked back-to-back. Interacts with the co-chaperonin GroES.

The protein localises to the cytoplasm. It catalyses the reaction ATP + H2O + a folded polypeptide = ADP + phosphate + an unfolded polypeptide.. Functionally, together with its co-chaperonin GroES, plays an essential role in assisting protein folding. The GroEL-GroES system forms a nano-cage that allows encapsulation of the non-native substrate proteins and provides a physical environment optimized to promote and accelerate protein folding. In Shewanella baltica (strain OS155 / ATCC BAA-1091), this protein is Chaperonin GroEL.